Consider the following 316-residue polypeptide: Golgi to ER traffic protein 2 (316 aa).

Positions 1-75 (MATELSDAEK…SDEEVEKSTK (75 aa)) are disordered. Residues 1-167 (MATELSDAEK…LKYYKFKVSK (167 aa)) lie on the Cytoplasmic side of the membrane. Residues 7–19 (DAEKRKLLRERRQ) are compositionally biased toward basic and acidic residues. 2 stretches are compositionally biased toward polar residues: residues 22-48 (FSNG…STSV) and 56-65 (PSGNKKSSNV). The helical transmembrane segment at 168–187 (LKSYIILIKWALLAPYVYFI) threads the bilayer. The Lumenal segment spans residues 188–209 (MHPNPTVLQASNLLSQIVERSN). A helical membrane pass occupies residues 210 to 229 (FFSIFTGLEIVFISIYYQML). Topologically, residues 230-276 (KKLQRDNNVTATQNAGGILKYLTMIPEGILPIRNIQGKIGLALEYFD) are cytoplasmic. A helical transmembrane segment spans residues 277–297 (VASMYVTDICFVLVLFGVMKY). The Lumenal segment spans residues 298-316 (YHSSFPISVPIEPPIAGIQ).

The protein belongs to the GET2 family. In terms of assembly, component of the Golgi to ER traffic (GET) complex, which is composed of GET1, GET2 and GET3. Within the complex, GET1 and GET2 form a heterotetramer which is stabilized by phosphatidylinositol binding and which binds to the GET3 homodimer.

It localises to the endoplasmic reticulum membrane. It is found in the golgi apparatus membrane. Its function is as follows. Required for the post-translational delivery of tail-anchored (TA) proteins to the endoplasmic reticulum. Together with GET1, acts as a membrane receptor for soluble GET3, which recognizes and selectively binds the transmembrane domain of TA proteins in the cytosol. The GET complex cooperates with the HDEL receptor ERD2 to mediate the ATP-dependent retrieval of resident ER proteins that contain a C-terminal H-D-E-L retention signal from the Golgi to the ER. This Kluyveromyces lactis (strain ATCC 8585 / CBS 2359 / DSM 70799 / NBRC 1267 / NRRL Y-1140 / WM37) (Yeast) protein is Golgi to ER traffic protein 2.